A 533-amino-acid chain; its full sequence is Retinoid isomerohydrolase (533 aa).

Residue S2 is modified to N-acetylserine. 2 positions are modified to phosphothreonine: T101 and T105. C112 carries S-palmitoyl cysteine; in membrane form lipidation. K113 bears the N6-acetyllysine mark. S117 bears the Phosphoserine mark. H180 lines the Fe cation pocket. The S-palmitoyl cysteine; in membrane form moiety is linked to residue C231. Fe cation is bound by residues H241 and H313. S-palmitoyl cysteine; in membrane form attachment occurs at residues C329 and C330. A Fe cation-binding site is contributed by H527.

It belongs to the carotenoid oxygenase family. Interacts with MYO7A; this mediates light-dependent intracellular transport of RPE65. Requires Fe(2+) as cofactor. Post-translationally, palmitoylation by LRAT regulates ligand binding specificity; the palmitoylated form (membrane form) specifically binds all-trans-retinyl-palmitate, while the soluble unpalmitoylated form binds all-trans-retinol (vitamin A). As to expression, retinal pigment epithelium specific.

The protein resides in the cytoplasm. Its subcellular location is the cell membrane. It localises to the microsome membrane. The catalysed reaction is an all-trans-retinyl ester + H2O = 11-cis-retinol + a fatty acid + H(+). It catalyses the reaction lutein = (3R,3'S)-zeaxanthin. The enzyme catalyses all-trans-retinyl hexadecanoate + H2O = 11-cis-retinol + hexadecanoate + H(+). Critical isomerohydrolase in the retinoid cycle involved in regeneration of 11-cis-retinal, the chromophore of rod and cone opsins. Catalyzes the cleavage and isomerization of all-trans-retinyl fatty acid esters to 11-cis-retinol which is further oxidized by 11-cis retinol dehydrogenase to 11-cis-retinal for use as visual chromophore. Essential for the production of 11-cis retinal for both rod and cone photoreceptors. Also capable of catalyzing the isomerization of lutein to meso-zeaxanthin an eye-specific carotenoid. The soluble form binds vitamin A (all-trans-retinol), making it available for LRAT processing to all-trans-retinyl ester. The membrane form, palmitoylated by LRAT, binds all-trans-retinyl esters, making them available for IMH (isomerohydrolase) processing to all-cis-retinol. The soluble form is regenerated by transferring its palmitoyl groups onto 11-cis-retinol, a reaction catalyzed by LRAT. The sequence is that of Retinoid isomerohydrolase (RPE65) from Bos taurus (Bovine).